A 275-amino-acid polypeptide reads, in one-letter code: NH(3)-dependent NAD(+) synthetase (275 aa).

Position 46–53 (46–53 (GISGGQDS)) interacts with ATP. Position 52 (Asp-52) interacts with Mg(2+). Arg-140 is a binding site for deamido-NAD(+). Thr-160 contacts ATP. Residue Glu-165 coordinates Mg(2+). Deamido-NAD(+)-binding residues include Lys-173 and Asp-180. Lys-189 and Thr-211 together coordinate ATP. Deamido-NAD(+) is bound at residue 260-261 (HK).

Belongs to the NAD synthetase family. In terms of assembly, homodimer.

The catalysed reaction is deamido-NAD(+) + NH4(+) + ATP = AMP + diphosphate + NAD(+) + H(+). The protein operates within cofactor biosynthesis; NAD(+) biosynthesis; NAD(+) from deamido-NAD(+) (ammonia route): step 1/1. Its function is as follows. Catalyzes the ATP-dependent amidation of deamido-NAD to form NAD. Uses ammonia as a nitrogen source. The polypeptide is NH(3)-dependent NAD(+) synthetase (Escherichia coli O139:H28 (strain E24377A / ETEC)).